Consider the following 2272-residue polypeptide: Voltage-dependent R-type calcium channel subunit alpha-1E (2272 aa).

The interval 1–40 is disordered; the sequence is MARFGEAVVVGRPGSGDGDSDQSRNRQGTPVPASGPAAAY. At 1-90 the chain is on the cytoplasmic side; that stretch reads MARFGEAVVV…KYAKKLIDWP (90 aa). 2 positions are modified to phosphoserine: serine 15 and serine 20. The I repeat unit spans residues 77–355; the sequence is NIVRKYAKKL…LVLGVLSGEF (279 aa). Residues 91-109 form a helical membrane-spanning segment; it reads PFEYMILATIIANCIVLAL. The Extracellular portion of the chain corresponds to 110-128; sequence EQHLPEDDKTPMSRRLEKT. A helical transmembrane segment spans residues 129-147; it reads EPYFIGIFCFEAGIKIVAL. The Cytoplasmic portion of the chain corresponds to 148–159; it reads GFIFHKGSYLRN. The chain crosses the membrane as a helical span at residues 160 to 174; the sequence is GWNVMDFIVVLSGIL. Over 175–186 the chain is Extracellular; sequence ATAGTHFNTHVD. The helical transmembrane segment at 187-206 threads the bilayer; it reads LRALRAVRVLRPLKLVSGIP. At 207 to 224 the chain is on the cytoplasmic side; sequence SLQIVLKSIMKAMVPLLQ. The helical transmembrane segment at 225–245 threads the bilayer; sequence IGLLLFFAILMFAIIGLEFYS. The Extracellular portion of the chain corresponds to 246–327; the sequence is GKLHRACFMN…NTNDALGATW (82 aa). An N-linked (GlcNAc...) asparagine glycan is attached at asparagine 255. A helical transmembrane segment spans residues 328–351; the sequence is NWLYFIPLIIIGSFFVLNLVLGVL. At 352–477 the chain is on the cytoplasmic side; sequence SGEFAKERER…ISIRHMVKSQ (126 aa). Positions 375-392 are binding to the beta subunit; sequence QQIERELNGYRAWIDKAE. Aspartate 427 lines the Ca(2+) pocket. Position 428 is a phosphoserine (serine 428). Ca(2+) is bound by residues serine 429, glutamate 431, cysteine 433, and serine 438. Phosphothreonine is present on threonine 441. Residues 463–707 form an II repeat; the sequence is ERLLRISIRH…VFLAIAVDNL (245 aa). The chain crosses the membrane as a helical span at residues 478–497; it reads VFYWIVLSVVALNTACVAIV. The Extracellular portion of the chain corresponds to 498–510; sequence HHNQPQWLTHLLY. The chain crosses the membrane as a helical span at residues 511–530; that stretch reads YAEFLFLGLFLLEMSLKMYG. The Cytoplasmic segment spans residues 531 to 539; it reads MGPRLYFHS. Residues 540–558 form a helical membrane-spanning segment; that stretch reads SFNCFDFGVTVGSIFEVVW. The Extracellular segment spans residues 559 to 568; that stretch reads AIFRPGTSFG. Residues 569–587 traverse the membrane as a helical segment; it reads ISVLRALRLLRIFKITKYW. Residues 588–606 are Cytoplasmic-facing; it reads ASLRNLVVSLMSSMKSIIS. A helical transmembrane segment spans residues 607–626; the sequence is LLFLLFLFIVVFALLGMQLF. Topologically, residues 627-679 are extracellular; sequence GGRFNFNDGTPSANFDTFPAAIMTVFQILTGEDWNEVMYNGIRSQGGVSSGMW. The helical transmembrane segment at 680–704 threads the bilayer; the sequence is SAIYFIVLTLFGNYTLLNVFLAIAV. Topologically, residues 705–1150 are cytoplasmic; sequence DNLANAQELT…TTNPIRRACH (446 aa). A disordered region spans residues 730 to 777; that stretch reads LQKAKEVSPMSAPNMPSIERDRRRRHHMSMWEPRSSHLRERRRRHHMS. Residues serine 737, serine 746, serine 794, serine 816, and serine 856 each carry the phosphoserine modification. 2 disordered regions span residues 854–994 and 1091–1127; these read GGSL…VPRG and SNKTDGEASPLKEAETKEEEEEVEKKKKQKKEKRETG. The segment covering 914–927 has biased composition (basic residues); it reads RHRQSQRRSRHRRV. The span at 934-946 shows a compositional bias: low complexity; sequence SASASRSRSASQE. Serine 948 bears the Phosphoserine mark. 2 stretches are compositionally biased toward basic and acidic residues: residues 956 to 985 and 1094 to 1105; these read EGEKEHEPHSSHRSKEPTIHEEERTQDLRR and TDGEASPLKEAE. Residue serine 1099 is modified to Phosphoserine. An III repeat occupies 1143 to 1429; sequence NPIRRACHYI…IFVALIIITF (287 aa). Residues 1151–1167 form a helical membrane-spanning segment; sequence YIVNLRYFEMCILLVIA. Topologically, residues 1168–1191 are extracellular; that stretch reads ASSIALAAEDPVLTNSERNKVLRY. Residues 1192–1211 traverse the membrane as a helical segment; that stretch reads FDYVFTGVFTFEMVIKMIDQ. Residues 1212-1219 are Cytoplasmic-facing; it reads GLILQDGS. The helical transmembrane segment at 1220-1242 threads the bilayer; sequence YFRDLWNILDFVVVVGALVAFAL. Topologically, residues 1243–1256 are extracellular; the sequence is ANALGTNKGRDIKT. A helical membrane pass occupies residues 1257–1274; it reads IKSLRVLRVLRPLKTIKR. The Cytoplasmic segment spans residues 1275-1293; it reads LPKLKAVFDCVVTSLKNVF. Residues 1294–1313 form a helical membrane-spanning segment; it reads NILIVYKLFMFIFAVIAVQL. Residues 1314–1400 are Extracellular-facing; it reads FKGKFFYCTD…DRGPSRSNRM (87 aa). A helical transmembrane segment spans residues 1401–1424; sequence EMSIFYVVYFVVFPFFFVNIFVAL. The Cytoplasmic segment spans residues 1425 to 1481; the sequence is IIITFQEQGDKMMEECSLEKNERACIDFAISAKPLTRYMPQNRHTFQYRVWHFVVSP. The stretch at 1466–1729 is one IV repeat; the sequence is NRHTFQYRVW…LFVAVIMDNF (264 aa). The helical transmembrane segment at 1482-1500 threads the bilayer; it reads SFEYTIMAMIALNTVVLMM. The Extracellular segment spans residues 1501-1515; the sequence is KYYTAPCTYELALKY. The helical transmembrane segment at 1516–1535 threads the bilayer; the sequence is LNIAFTMVFSLECVLKVIAF. Residues 1536-1543 lie on the Cytoplasmic side of the membrane; sequence GFLNYFRD. A helical transmembrane segment spans residues 1544–1562; sequence TWNIFDFITVIGSITEIIL. The Extracellular portion of the chain corresponds to 1563–1573; the sequence is TDSKLVNTSGF. N-linked (GlcNAc...) asparagine glycosylation is present at asparagine 1569. A helical transmembrane segment spans residues 1574 to 1592; the sequence is NMSFLKLFRAARLIKLLRQ. The Cytoplasmic segment spans residues 1593–1611; the sequence is GYTIRILLWTFVQSFKALP. The helical transmembrane segment at 1612-1631 threads the bilayer; sequence YVCLLIAMLFFIYAIIGMQV. At 1632–1700 the chain is on the extracellular side; the sequence is FGNIKLDEES…QNESERCGTD (69 aa). N-linked (GlcNAc...) asparagine glycosylation occurs at asparagine 1692. The helical transmembrane segment at 1701-1726 threads the bilayer; the sequence is LAYVYFVSFIFFCSFLMLNLFVAVIM. The Cytoplasmic portion of the chain corresponds to 1727 to 2272; it reads DNFEYLTRDS…LSDTEEDDKC (546 aa). In terms of domain architecture, EF-hand spans 1742–1777; it reads HHLDEFVRVWAEYDRAACGRIHYTEMYEMLTLMSPP. Ca(2+) contacts are provided by aspartate 1755, arginine 1761, and glutamate 1766. The interval 2021 to 2186 is disordered; the sequence is SAHRLNSDSG…QQGQHPSPQH (166 aa). Residues 2025–2045 show a composition bias toward basic and acidic residues; it reads LNSDSGHKSDTHRSGGRERGR. Residues serine 2054 and serine 2073 each carry the phosphoserine modification. The span at 2061 to 2078 shows a compositional bias: basic and acidic residues; that stretch reads NSEERGTQADWESPERRQ. Low complexity predominate over residues 2097–2112; the sequence is SLSESSIPSISDTSTP. Over residues 2155-2174 the composition is skewed to polar residues; it reads LASQALESNSACLTESSNSL. Over residues 2175–2186 the composition is skewed to low complexity; the sequence is HPQQGQHPSPQH.

It belongs to the calcium channel alpha-1 subunit (TC 1.A.1.11) family. CACNA1E subfamily. Interacts with EFHC1. Voltage-dependent calcium channels are multisubunit complexes, consisting of alpha-1, alpha-2, beta and delta subunits in a 1:1:1:1 ratio. The channel activity is directed by the pore-forming and voltage-sensitive alpha-1 subunit. In many cases, this subunit is sufficient to generate voltage-sensitive calcium channel activity. The auxiliary subunits beta and alpha-2/delta linked by a disulfide bridge regulate the channel activity. As to expression, expressed in neuronal tissues, retina, spleen, and pancreatic islet cells.

It localises to the membrane. It carries out the reaction Ca(2+)(in) = Ca(2+)(out). Functionally, voltage-sensitive calcium channels (VSCC) mediate the entry of calcium ions into excitable cells and are also involved in a variety of calcium-dependent processes, including muscle contraction, hormone or neurotransmitter release, gene expression, cell motility, cell division and cell death. The isoform alpha-1E gives rise to R-type calcium currents. R-type calcium channels belong to the 'high-voltage activated' (HVA) group and are blocked by nickel. They are however insensitive to dihydropyridines (DHP). Calcium channels containing alpha-1E subunit could be involved in the modulation of firing patterns of neurons which is important for information processing. The chain is Voltage-dependent R-type calcium channel subunit alpha-1E (Cacna1e) from Mus musculus (Mouse).